Reading from the N-terminus, the 237-residue chain is Ribonuclease PH (237 aa).

Phosphate contacts are provided by residues R86 and 124–126 (GTR).

Belongs to the RNase PH family. As to quaternary structure, homohexameric ring arranged as a trimer of dimers.

It catalyses the reaction tRNA(n+1) + phosphate = tRNA(n) + a ribonucleoside 5'-diphosphate. In terms of biological role, phosphorolytic 3'-5' exoribonuclease that plays an important role in tRNA 3'-end maturation. Removes nucleotide residues following the 3'-CCA terminus of tRNAs; can also add nucleotides to the ends of RNA molecules by using nucleoside diphosphates as substrates, but this may not be physiologically important. Probably plays a role in initiation of 16S rRNA degradation (leading to ribosome degradation) during starvation. The sequence is that of Ribonuclease PH from Dinoroseobacter shibae (strain DSM 16493 / NCIMB 14021 / DFL 12).